Here is a 68-residue protein sequence, read N- to C-terminus: Inhibitor of trypsin and hageman factor (68 aa).

N-acetylserine is present on S1. C3 and C48 form a disulfide bridge.

It belongs to the protease inhibitor I13 (potato type I serine protease inhibitor) family.

Its function is as follows. Specifically inhibits both trypsin and activated Hageman factor. The chain is Inhibitor of trypsin and hageman factor from Cucurbita maxima (Pumpkin).